A 211-amino-acid polypeptide reads, in one-letter code: uncharacterized protein (211 aa).

Zn(2+) contacts are provided by His-54, His-56, Asp-58, His-59, His-129, Asp-148, and His-189.

The protein belongs to the metallo-beta-lactamase superfamily. Glyoxalase II family. Zn(2+) is required as a cofactor.

This is an uncharacterized protein from Aquifex aeolicus (strain VF5).